The chain runs to 368 residues: GDP-fucose transporter 1 (368 aa).

9 consecutive transmembrane segments (helical) span residues 64–84 (LSTIASVIAFYFFISISLVFL), 98–118 (LFITWYQQIISFVSIYIMTSI), 141–161 (VLPVTAVLTGMVIFNNLCLEY), 166–186 (FYQVARSLTICFSLILTYIVL), 195–215 (TMACLVVFLGFVLGSAGEVNF), 217–237 (WLGIIFGLLSSFFVALYSIAV), 251–271 (LSIYNTAISIGLIFPLILVSG), 287–307 (FWFYMTVAGLMGYLISISVFM), and 332–352 (AVVFWGNPISTQNAVGILLVI).

The protein belongs to the TPT transporter family. SLC35C subfamily.

The protein localises to the golgi apparatus membrane. The enzyme catalyses GMP(out) + GDP-beta-L-fucose(in) = GMP(in) + GDP-beta-L-fucose(out). Functionally, antiporter specific for GDP-l-fucose and depending on the concomitant reverse transport of GMP. Involved in GDP-fucose import from the cytoplasm into the Golgi lumen. In Dictyostelium discoideum (Social amoeba), this protein is GDP-fucose transporter 1 (slc35c1).